The sequence spans 107 residues: Protein TAP1 (107 aa).

A signal peptide spans 1-23; the sequence is MESKRVDVLVGLMLIMAIFGVHS.

In terms of tissue distribution, stamen.

The polypeptide is Protein TAP1 (TAP1) (Antirrhinum majus (Garden snapdragon)).